A 216-amino-acid chain; its full sequence is Protein-L-isoaspartate O-methyltransferase (216 aa).

S62 is an active-site residue.

This sequence belongs to the methyltransferase superfamily. L-isoaspartyl/D-aspartyl protein methyltransferase family.

Its subcellular location is the cytoplasm. It carries out the reaction [protein]-L-isoaspartate + S-adenosyl-L-methionine = [protein]-L-isoaspartate alpha-methyl ester + S-adenosyl-L-homocysteine. Its function is as follows. Catalyzes the methyl esterification of L-isoaspartyl residues in peptides and proteins that result from spontaneous decomposition of normal L-aspartyl and L-asparaginyl residues. It plays a role in the repair and/or degradation of damaged proteins. The polypeptide is Protein-L-isoaspartate O-methyltransferase (Methanospirillum hungatei JF-1 (strain ATCC 27890 / DSM 864 / NBRC 100397 / JF-1)).